The following is a 395-amino-acid chain: D-serine dehydratase (395 aa).

Lys-46 bears the N6-(pyridoxal phosphate)lysine mark. Pyridoxal 5'-phosphate-binding residues include Tyr-184, Tyr-191, Thr-232, Gly-254, and Asn-255. Zn(2+)-binding residues include His-365 and Cys-367.

This sequence belongs to the DSD1 family. Requires pyridoxal 5'-phosphate as cofactor. Zn(2+) is required as a cofactor.

It catalyses the reaction D-serine = pyruvate + NH4(+). Its function is as follows. Catalyzes the conversion of D-serine to pyruvate and ammonia. Plays a role in D-serine detoxification. The polypeptide is D-serine dehydratase (Dictyostelium discoideum (Social amoeba)).